A 567-amino-acid chain; its full sequence is Serine/threonine-protein kinase SSN3 (567 aa).

The Protein kinase domain maps to 68–470 (YEIIGYIAAG…AINALDHSYF (403 aa)). 74-82 (IAAGTYGKV) contributes to the ATP binding site. Positions 88–179 (RQSSKSSSST…RNSENTDNRR (92 aa)) are disordered. A compositionally biased stretch (low complexity) spans 90-101 (SSKSSSSTGSDS). 2 stretches are compositionally biased toward polar residues: residues 102–122 (LAQD…QNAG) and 133–150 (PNSN…ELST). Positions 167–179 (GDKRNSENTDNRR) are enriched in basic and acidic residues. K190 lines the ATP pocket. Catalysis depends on D293, which acts as the Proton acceptor. Low complexity predominate over residues 546-556 (AVSGNSSSQSS). A disordered region spans residues 546–567 (AVSGNSSSQSSRNMEPMKKKRK).

This sequence belongs to the protein kinase superfamily. CMGC Ser/Thr protein kinase family. CDC2/CDKX subfamily. Component of the SRB8-11 complex, a regulatory module of the Mediator complex. Mg(2+) serves as cofactor.

Its subcellular location is the nucleus. The enzyme catalyses L-seryl-[protein] + ATP = O-phospho-L-seryl-[protein] + ADP + H(+). It carries out the reaction L-threonyl-[protein] + ATP = O-phospho-L-threonyl-[protein] + ADP + H(+). It catalyses the reaction [DNA-directed RNA polymerase] + ATP = phospho-[DNA-directed RNA polymerase] + ADP + H(+). Component of the SRB8-11 complex. The SRB8-11 complex is a regulatory module of the Mediator complex which is itself involved in regulation of basal and activated RNA polymerase II-dependent transcription. The SRB8-11 complex may be involved in the transcriptional repression of a subset of genes regulated by Mediator. It may inhibit the association of the Mediator complex with RNA polymerase II to form the holoenzyme complex. The SRB8-11 complex phosphorylates the C-terminal domain (CTD) of the largest subunit of RNA polymerase II. This chain is Serine/threonine-protein kinase SSN3 (SSN3), found in Candida glabrata (strain ATCC 2001 / BCRC 20586 / JCM 3761 / NBRC 0622 / NRRL Y-65 / CBS 138) (Yeast).